Here is a 291-residue protein sequence, read N- to C-terminus: Transmembrane O-methyltransferase (291 aa).

Residues 31–51 (VGTMSPAIALAFLPLVVTLLV) form a helical membrane-spanning segment. S-adenosyl-L-methionine-binding positions include glutamate 137, 139–140 (GT), serine 145, glutamate 163, and serine 193.

This sequence belongs to the class I-like SAM-binding methyltransferase superfamily. Cation-dependent O-methyltransferase family. As to quaternary structure, interacts with LHFPL5, PCDH15, TMC1, TMC2 and TMIE. Interacts directly with TMC1. The interaction of TOMT with TMC1 and TMC2 is required for the transportation of TMC1/2 into the stereocilia of hair cells.

Its subcellular location is the membrane. The protein resides in the cytoplasm. It localises to the endoplasmic reticulum. It catalyses the reaction a catechol + S-adenosyl-L-methionine = a guaiacol + S-adenosyl-L-homocysteine + H(+). Functionally, catalyzes the O-methylation, and thereby the inactivation, of catecholamine neurotransmitters and catechol hormones. Required for auditory function. Component of the cochlear hair cell's mechanotransduction (MET) machinery. Involved in the assembly of the asymmetric tip-link MET complex. Required for transportation of TMC1 and TMC2 proteins into the mechanically sensitive stereocilia of the hair cells. The function in MET is independent of the enzymatic activity. The chain is Transmembrane O-methyltransferase from Homo sapiens (Human).